The chain runs to 909 residues: Aconitate hydratase A (909 aa).

Cysteine 450, cysteine 516, and cysteine 519 together coordinate [4Fe-4S] cluster.

Belongs to the aconitase/IPM isomerase family. Monomer. The cofactor is [4Fe-4S] cluster.

It catalyses the reaction citrate = D-threo-isocitrate. The enzyme catalyses 3-hydroxybutane-1,2,3-tricarboxylate = 2-methyl-cis-aconitate + H2O. It participates in carbohydrate metabolism; tricarboxylic acid cycle; isocitrate from oxaloacetate: step 2/2. In terms of biological role, involved in both the tricarboxylic acid (TCA) and methylcitric acid cycles. Catalyzes the reversible isomerization of citrate to isocitrate via cis-aconitate. Also catalyzes the rehydration of 2-methyl-cis-aconitate to produce 2-methylisocitrate. The apo form of AcnA functions as a RNA-binding regulatory protein which plays a role in the regulation of citrate concentration and in the sporulation. To prevent the accumulation of excessive levels of citrate, it binds near the 5' end of the citZ mRNA, decreasing its stability and thereby limiting the concentration of citrate synthase in the cell. Aconitase also binds to the gerE transcript late in sporulation and stabilizes it for translation, thereby increasing the rate and level of GerE protein accumulation. The protein is Aconitate hydratase A (citB) of Bacillus subtilis (strain 168).